The primary structure comprises 271 residues: Ribosomal RNA small subunit methyltransferase A (271 aa).

The S-adenosyl-L-methionine site is built by His-11, Leu-13, Gly-38, Glu-58, Asp-86, and Asn-101.

The protein belongs to the class I-like SAM-binding methyltransferase superfamily. rRNA adenine N(6)-methyltransferase family. RsmA subfamily.

The protein localises to the cytoplasm. The enzyme catalyses adenosine(1518)/adenosine(1519) in 16S rRNA + 4 S-adenosyl-L-methionine = N(6)-dimethyladenosine(1518)/N(6)-dimethyladenosine(1519) in 16S rRNA + 4 S-adenosyl-L-homocysteine + 4 H(+). Specifically dimethylates two adjacent adenosines (A1518 and A1519) in the loop of a conserved hairpin near the 3'-end of 16S rRNA in the 30S particle. May play a critical role in biogenesis of 30S subunits. The protein is Ribosomal RNA small subunit methyltransferase A of Helicobacter pylori (strain HPAG1).